The sequence spans 309 residues: Tumor necrosis factor ligand superfamily member 13B (309 aa).

The Cytoplasmic segment spans residues 1–47; it reads MDESAKTLPPPCLCFCSEKGEDMKVGYDPITPQKEEGAWFGICRDGR. Residues 48–68 form a helical; Signal-anchor for type II membrane protein membrane-spanning segment; the sequence is LLAATLLLALLSSSFTAMSLY. At 69–309 the chain is on the extracellular side; that stretch reads QLAALQADLM…DTFFGALKLL (241 aa). Residues 110–140 are disordered; sequence PAAPRPHNSSRGHRNRRAFQGPEETEQDVDL. N-linked (GlcNAc...) asparagine glycans are attached at residues N117 and N266. Positions 117–126 are enriched in basic residues; it reads NSSRGHRNRR. One can recognise a THD domain in the interval 169 to 308; that stretch reads DCLQLIADSD…DDTFFGALKL (140 aa). A disulfide bond links C256 and C269.

It belongs to the tumor necrosis factor family. As to quaternary structure, homotrimer. Isoform 2 heteromultimerizes with isoform 1, probably limiting the amount of functional isoform 1 on the cell surface. In terms of processing, the soluble form derives from the membrane form by proteolytic processing. Isoform 2 is not efficiently shed from the membrane unlike isoform 1. Isoform 2 is expressed in many myeloid cell lines.

It localises to the cell membrane. Its subcellular location is the secreted. Its function is as follows. Cytokine that binds to TNFRSF13B/TACI and TNFRSF17/BCMA. TNFSF13/APRIL binds to the same 2 receptors. Together, they form a 2 ligands -2 receptors pathway involved in the stimulation of B- and T-cell function and the regulation of humoral immunity. A third B-cell specific BAFF-receptor (BAFFR/BR3) promotes the survival of mature B-cells and the B-cell response. Isoform 2 seems to inhibit isoform 1 secretion and bioactivity. This Mus musculus (Mouse) protein is Tumor necrosis factor ligand superfamily member 13B (Tnfsf13b).